A 122-amino-acid polypeptide reads, in one-letter code: uncharacterized protein (122 aa).

Residues 97–122 (TSRNGFSNPNKDGKKNDDDNNSSSKS) are disordered.

This is an uncharacterized protein from Mycoplasma genitalium (strain ATCC 33530 / DSM 19775 / NCTC 10195 / G37) (Mycoplasmoides genitalium).